The chain runs to 212 residues: Small ribosomal subunit protein uS3 (212 aa).

The 70-residue stretch at 39 to 108 folds into the KH type-2 domain; that stretch reads IKNYIKERYK…EITISVVEVR (70 aa).

The protein belongs to the universal ribosomal protein uS3 family. Part of the 30S ribosomal subunit. Forms a tight complex with proteins S10 and S14.

Binds the lower part of the 30S subunit head. Binds mRNA in the 70S ribosome, positioning it for translation. In Aquifex aeolicus (strain VF5), this protein is Small ribosomal subunit protein uS3.